A 413-amino-acid chain; its full sequence is 1-acylglycerol-3-phosphate O-acyltransferase Pnpla3 (413 aa).

The Cytoplasmic portion of the chain corresponds to 1-42 (MYDPERRWSLSFAGCGFLGFYHVGATLCLSERAPHLLRDART). Residues 10-179 (LSFAGCGFLG…SDNVPVLDAK (170 aa)) enclose the PNPLA domain. Positions 14 to 19 (GCGFLG) match the GXGXXG motif. Residues 43–63 (FFGCSAGALHAVTFVCSLPLG) form a helical; Signal-anchor for type II membrane protein membrane-spanning segment. Positions 45 to 49 (GCSAG) match the GXSXG motif. Catalysis depends on Ser47, which acts as the Nucleophile. Topologically, residues 64–413 (RIMEILMDLV…HKPQGNSAGL (350 aa)) are lumenal. Asp166 serves as the catalytic Proton acceptor. Residues 166 to 168 (DGG) carry the DGA/G motif. Residues Asn206 and Asn209 are each glycosylated (N-linked (GlcNAc...) asparagine). A disordered region spans residues 389 to 413 (KDDHRMLKHGHHPSPHKPQGNSAGL). Over residues 394–403 (MLKHGHHPSP) the composition is skewed to basic residues.

As to expression, restricted to adipose tissue. Expressed in inguinal and epididymal white adipose tissues and in interscapular brown adipose tissue. Also expressed in liver in response to high-sucrose diet.

The protein localises to the membrane. The protein resides in the lipid droplet. It catalyses the reaction a 1-acyl-sn-glycero-3-phosphate + an acyl-CoA = a 1,2-diacyl-sn-glycero-3-phosphate + CoA. The catalysed reaction is a triacylglycerol + H2O = a diacylglycerol + a fatty acid + H(+). It carries out the reaction a 1-acylglycerol + a 1,3-diacylglycerol = a triacylglycerol + glycerol. The enzyme catalyses a 1-acylglycerol + a 1,2-diacylglycerol = a triacylglycerol + glycerol. It catalyses the reaction 2 a 1-acylglycerol = a 1,2-diacylglycerol + glycerol. The catalysed reaction is 1-(9Z-octadecenoyl)-sn-glycero-3-phosphate + (9Z)-octadecenoyl-CoA = 1,2-di-(9Z-octadecenoyl)-sn-glycero-3-phosphate + CoA. It carries out the reaction 1-(9Z-octadecenoyl)-sn-glycero-3-phosphate + hexadecanoyl-CoA = 1-(9Z)-octadecenoyl-2-hexadecanoyl-sn-glycero-3-phosphate + CoA. The enzyme catalyses 1-(9Z-octadecenoyl)-sn-glycero-3-phosphate + (9Z,12Z)-octadecadienoyl-CoA = 1-(9Z)-octadecenoyl-2-(9Z,12Z)-octadecadienoyl-sn-glycero-3-phosphate + CoA. It catalyses the reaction 1-(9Z-octadecenoyl)-sn-glycero-3-phosphate + (5Z,8Z,11Z,14Z)-eicosatetraenoyl-CoA = 1-(9Z)-octadecenoyl-2-(5Z,8Z,11Z,14Z)-eicosatetraenoyl-sn-glycero-3-phosphate + CoA. The catalysed reaction is 2 1-(9Z-octadecenoyl)-glycerol = 1,2-di-(9Z-octadecenoyl)-glycerol + glycerol. It carries out the reaction 1-(9Z-octadecenoyl)-glycerol + 1,2-di-(9Z-octadecenoyl)-glycerol = 1,2,3-tri-(9Z-octadecenoyl)-glycerol + glycerol. The enzyme catalyses 1-(9Z-octadecenoyl)-glycerol + 1,3-di-(9Z-octadecenoyl)-glycerol = 1,2,3-tri-(9Z-octadecenoyl)-glycerol + glycerol. It catalyses the reaction 1,2,3-tri-(9Z-octadecenoyl)-glycerol + H2O = 1,3-di-(9Z-octadecenoyl)-glycerol + (9Z)-octadecenoate + H(+). The catalysed reaction is a 1,2-diacyl-sn-glycero-3-phosphocholine + H2O = a 1-acyl-sn-glycero-3-phosphocholine + a fatty acid + H(+). It participates in phospholipid metabolism. Its pathway is glycerolipid metabolism. In terms of biological role, specifically catalyzes coenzyme A (CoA)-dependent acylation of 1-acyl-sn-glycerol 3-phosphate (2-lysophosphatidic acid/LPA) to generate phosphatidic acid (PA), an important metabolic intermediate and precursor for both triglycerides and glycerophospholipids. Does not esterify other lysophospholipids. Acyl donors are long chain (at least C16) fatty acyl-CoAs: arachidonoyl-CoA, linoleoyl-CoA, oleoyl-CoA and at a lesser extent palmitoyl-CoA. Additionally possesses low triacylglycerol lipase and CoA-independent acylglycerol transacylase activities and thus may play a role in acyl-chain remodeling of triglycerides. In vitro may express hydrolytic activity against glycerolipids triacylglycerol, diacylglycerol and monoacylglycerol, with a strong preference for oleic acid as the acyl moiety. However, the triacylglycerol hydrolase activity is controversial and may be very low. Possesses phospholipase A2 activity. This is 1-acylglycerol-3-phosphate O-acyltransferase Pnpla3 from Mus musculus (Mouse).